A 114-amino-acid chain; its full sequence is Protein preY, mitochondrial (114 aa).

The N-terminal 35 residues, 1-35, are a transit peptide targeting the mitochondrion; it reads MLSGARCRLASALRGTRAPPSAVARRCLHASGSRP. The interval 14 to 49 is disordered; it reads RGTRAPPSAVARRCLHASGSRPLADRGKKTEEPPRD. Basic and acidic residues predominate over residues 36 to 49; it reads LADRGKKTEEPPRD. In terms of domain architecture, TRM112 spans 51 to 97; sequence DPALLEFLVCPLSKKPLRYEASTNELINEELGIAYPIIDGIPNMIPQ.

It belongs to the PREY family. As to quaternary structure, interacts (via TRM112 domain) with NDUFAF5; the interaction is direct and stabilizes NDUFAF5 protein. Interacts with COQ5; the interaction is direct, stabilizes COQ5 protein and associates PYURF with COQ enzyme complex.

The protein resides in the mitochondrion. Functionally, in mitochondria, S-adenosylmethionine-dependent methyltransferase chaperone that supports both coenzyme Q biosynthesis, by stabilizing its components, such as COQ5, and NADH:ubiquinone oxidoreductase complex (complex I, MT-ND1) assembly, by stabilizing complex I assembly factors, such as NDUFAF5. This is Protein preY, mitochondrial from Homo sapiens (Human).